Reading from the N-terminus, the 327-residue chain is NF-kappa-B inhibitor delta (327 aa).

The segment at 1–40 is disordered; that stretch reads MEDSLDTRLYPEPSLSQVGSWRVSSLPSGSPQLPSPTGPS. The span at 14 to 23 shows a compositional bias: polar residues; that stretch reads SLSQVGSWRV. 6 ANK repeats span residues 62-97, 98-127, 131-160, 166-215, 220-250, and 257-290; these read EGDT…IREH, KGKT…EPNA, QGRS…QVDL, EGLT…SHTS, SNKT…DLRA, and HGNT…DPTL. The interval 293-327 is disordered; that stretch reads LENEQPVHLLRPGPGPEGLRQLLKRSRTAPPGLSS.

It belongs to the NF-kappa-B inhibitor family. In terms of assembly, interacts with NFKB1, RELA and RELB; in the nucleus. As to expression, specifically expressed in spleen and at low levels in thymus. Expressed in a population of antigen-presenting dendritic cells which may act as regulators of systemic inflammatory response.

The protein localises to the nucleus. Its function is as follows. Regulates the expression of IL-2, IL-6, and other cytokines through regulation on NF-kappa-B activity. Functions in the regulation of inflammatory responses. Involved in the induction of T helper 17 cells (Th17) differentiation upon recognition of antigen by T cell antigen receptor (TCR). According to PubMed:11931770, it may also regulate TCR-induced negative selection of thymocytes. This Mus musculus (Mouse) protein is NF-kappa-B inhibitor delta (Nfkbid).